The primary structure comprises 640 residues: Threonine--tRNA ligase (640 aa).

The region spanning 1-61 is the TGS domain; it reads MPIITLPDGS…ERDATLQIIT (61 aa). Positions 242 to 533 are catalytic; the sequence is DHRRIGKQLD…LIEHYAGAFP (292 aa). C333, H384, and H510 together coordinate Zn(2+).

Belongs to the class-II aminoacyl-tRNA synthetase family. In terms of assembly, homodimer. The cofactor is Zn(2+).

It localises to the cytoplasm. The enzyme catalyses tRNA(Thr) + L-threonine + ATP = L-threonyl-tRNA(Thr) + AMP + diphosphate + H(+). Its function is as follows. Catalyzes the attachment of threonine to tRNA(Thr) in a two-step reaction: L-threonine is first activated by ATP to form Thr-AMP and then transferred to the acceptor end of tRNA(Thr). Also edits incorrectly charged L-seryl-tRNA(Thr). This Pseudomonas paraeruginosa (strain DSM 24068 / PA7) (Pseudomonas aeruginosa (strain PA7)) protein is Threonine--tRNA ligase.